A 286-amino-acid polypeptide reads, in one-letter code: ATP synthase gamma chain (286 aa).

This sequence belongs to the ATPase gamma chain family. In terms of assembly, F-type ATPases have 2 components, CF(1) - the catalytic core - and CF(0) - the membrane proton channel. CF(1) has five subunits: alpha(3), beta(3), gamma(1), delta(1), epsilon(1). CF(0) has three main subunits: a, b and c.

The protein resides in the cell inner membrane. Produces ATP from ADP in the presence of a proton gradient across the membrane. The gamma chain is believed to be important in regulating ATPase activity and the flow of protons through the CF(0) complex. The sequence is that of ATP synthase gamma chain from Shewanella frigidimarina (strain NCIMB 400).